The following is a 226-amino-acid chain: Aspartyl protease inhibitor (226 aa).

A signal peptide spans 1 to 15 (MKLLFLCALIALTAA). 2 disordered regions span residues 95–116 (GKKG…KKPS) and 196–218 (EAKQ…QPNV). Cysteines 131 and 222 form a disulfide.

This sequence belongs to the protease inhibitor I33 family.

It is found in the secreted. Its function is as follows. Aspartyl protease inhibitor. In Parelaphostrongylus tenuis (Meningeal worm), this protein is Aspartyl protease inhibitor.